Consider the following 947-residue polypeptide: Bromodomain testis-specific protein (947 aa).

One can recognise a Bromo 1 domain in the interval 27-133 (RLTNQLQYLQ…KLFMQKLSQM (107 aa)). Residue N109 coordinates JQ1. Position 187 is a phosphoserine (S187). The segment at 202–228 (QTAAQVTKGVKRKADTTTPATSAVKAS) is disordered. Positions 209-220 (KGVKRKADTTTP) match the Nuclear localization signal motif. The segment covering 217 to 228 (TTTPATSAVKAS) has biased composition (polar residues). Residues 267–376 (VKVTEQLRHC…DVFETHFSKI (110 aa)) enclose the Bromo 2 domain. Disordered stretches follow at residues 395–420 (ETTG…DERV), 444–511 (PFRK…KPMN), 610–698 (NNQL…IPPE), and 882–924 (NKCS…RRRE). The stretch at 417-470 (DERVKRLAKLQEQLKAVHQQLQVLSQVPFRKLNKKKEKSKKEKKKEKVNNSNEN) forms a coiled coil. Residues 447 to 462 (KLNKKKEKSKKEKKKE) show a composition bias toward basic residues. Over residues 470–481 (NPRKMCEQMRLK) the composition is skewed to basic and acidic residues. The segment covering 482-494 (EKSKRNQPKKRKQ) has biased composition (basic residues). Positions 500–582 (KSEDEDNAKP…ACLRKRPLKP (83 aa)) constitute an NET domain. Residues 591-621 (KEELHSQKKQELEKRLLDVNNQLNSRKRQTK) adopt a coiled-coil conformation. Residues 637-662 (LSESSSSSSSSSESESSSSDLSSSDS) are compositionally biased toward low complexity. 2 stretches are compositionally biased toward basic and acidic residues: residues 674–692 (TEVK…KMKN) and 885–924 (SGEE…RRRE).

The protein belongs to the BET family. As to quaternary structure, interacts with mRNA splicing machinery proteins SRSF2, DDX5, HNRNPK and TARDBP. Interacts with the acetylated N-terminus of histone H1, H2, H3 and H4. Interacts with P-TEFb components CDK9 and CCNT1/cyclin-T1. Interacts with SMARCE1. Interacts with the acetylated N-terminus of histone H1.4, H2A, H2B, H3 and H4. Ubiquitinated in a SPOP-dependent manner, leading to proteasomal degradation. Testis-specific. A 3-fold higher expression is seen in adult testis than in embryo testis. Expression seems to be correlated with histone H4 hyperacetylation during the haploid phase of spermatogenesis (spermiogenesis). No expression, or very low expression is seen in patients' testes with abnormal spermatogenesis. Expressed in cancers such as non-small cell lung cancer and squamous cell carcinomas of the head and neck as well as of esophagus, but not in melanoma or in cancers of the colon, breast, kidney and bladder.

The protein localises to the nucleus. Functionally, testis-specific chromatin protein that specifically binds histone H4 acetylated at 'Lys-5' and 'Lys-8' (H4K5ac and H4K8ac, respectively) and plays a key role in spermatogenesis. Required in late pachytene spermatocytes: plays a role in meiotic and post-meiotic cells by binding to acetylated histones at the promoter of specific meiotic and post-meiotic genes, facilitating their activation at the appropriate time. In the post-meiotic phase of spermatogenesis, binds to hyperacetylated histones and participates in their general removal from DNA. Also recognizes and binds a subset of butyrylated histones: able to bind histone H4 butyrylated at 'Lys-8' (H4K8ac), while it is not able to bind H4 butyrylated at 'Lys-5' (H4K5ac). Also acts as a component of the splicing machinery in pachytene spermatocytes and round spermatids and participates in 3'-UTR truncation of specific mRNAs in post-meiotic spermatids. Required for chromocenter organization, a structure comprised of peri-centromeric heterochromatin. The chain is Bromodomain testis-specific protein (BRDT) from Homo sapiens (Human).